The sequence spans 364 residues: Histidinol-phosphate aminotransferase 1 (364 aa).

Lys211 is modified (N6-(pyridoxal phosphate)lysine).

This sequence belongs to the class-II pyridoxal-phosphate-dependent aminotransferase family. Histidinol-phosphate aminotransferase subfamily. In terms of assembly, homodimer. Requires pyridoxal 5'-phosphate as cofactor.

It catalyses the reaction L-histidinol phosphate + 2-oxoglutarate = 3-(imidazol-4-yl)-2-oxopropyl phosphate + L-glutamate. It participates in amino-acid biosynthesis; L-histidine biosynthesis; L-histidine from 5-phospho-alpha-D-ribose 1-diphosphate: step 7/9. The polypeptide is Histidinol-phosphate aminotransferase 1 (Legionella pneumophila (strain Paris)).